A 431-amino-acid chain; its full sequence is Enolase (431 aa).

Gln-163 serves as a coordination point for (2R)-2-phosphoglycerate. Glu-205 serves as the catalytic Proton donor. Asp-242, Glu-288, and Asp-315 together coordinate Mg(2+). (2R)-2-phosphoglycerate contacts are provided by Lys-340, Arg-369, Ser-370, and Lys-391. Lys-340 serves as the catalytic Proton acceptor.

Belongs to the enolase family. The cofactor is Mg(2+).

The protein localises to the cytoplasm. It localises to the secreted. Its subcellular location is the cell surface. It catalyses the reaction (2R)-2-phosphoglycerate = phosphoenolpyruvate + H2O. It participates in carbohydrate degradation; glycolysis; pyruvate from D-glyceraldehyde 3-phosphate: step 4/5. In terms of biological role, catalyzes the reversible conversion of 2-phosphoglycerate (2-PG) into phosphoenolpyruvate (PEP). It is essential for the degradation of carbohydrates via glycolysis. The chain is Enolase from Latilactobacillus sakei subsp. sakei (strain 23K) (Lactobacillus sakei subsp. sakei).